An 89-amino-acid polypeptide reads, in one-letter code: MKPMYRSRSWRRKYVRTPGGRTVIHFERRKPKVAHCAMCGRPLNGVPRGRPSELRKLPKTAKRPERPYPNLCPSCMRKVIKAQVRASLS.

The segment at 41-69 is disordered; it reads RPLNGVPRGRPSELRKLPKTAKRPERPYP. Positions 50 to 66 are enriched in basic and acidic residues; that stretch reads RPSELRKLPKTAKRPER.

The protein belongs to the eukaryotic ribosomal protein eL34 family.

This chain is Large ribosomal subunit protein eL34, found in Thermococcus gammatolerans (strain DSM 15229 / JCM 11827 / EJ3).